The primary structure comprises 118 residues: Large ribosomal subunit protein bL19 (118 aa).

Belongs to the bacterial ribosomal protein bL19 family.

Functionally, this protein is located at the 30S-50S ribosomal subunit interface and may play a role in the structure and function of the aminoacyl-tRNA binding site. In Campylobacter jejuni subsp. jejuni serotype O:2 (strain ATCC 700819 / NCTC 11168), this protein is Large ribosomal subunit protein bL19.